The sequence spans 180 residues: Adenine phosphoribosyltransferase (180 aa).

At Ser-2 the chain carries N-acetylserine. 2 positions are modified to phosphoserine: Ser-15 and Ser-30. Tyr-60 bears the Phosphotyrosine mark. Ser-66 is subject to Phosphoserine. An N6-acetyllysine modification is found at Lys-114. At Thr-135 the chain carries Phosphothreonine.

The protein belongs to the purine/pyrimidine phosphoribosyltransferase family. In terms of assembly, homodimer.

The protein localises to the cytoplasm. The catalysed reaction is AMP + diphosphate = 5-phospho-alpha-D-ribose 1-diphosphate + adenine. Its pathway is purine metabolism; AMP biosynthesis via salvage pathway; AMP from adenine: step 1/1. Catalyzes a salvage reaction resulting in the formation of AMP, that is energically less costly than de novo synthesis. This chain is Adenine phosphoribosyltransferase, found in Mastomys natalensis (African soft-furred rat).